Consider the following 105-residue polypeptide: uncharacterized protein (105 aa).

It to C.jejuni CJ1463.

This is an uncharacterized protein from Helicobacter pylori (strain ATCC 700392 / 26695) (Campylobacter pylori).